A 195-amino-acid polypeptide reads, in one-letter code: Ephrin-A2 (195 aa).

An N-terminal signal peptide occupies residues Met1–Val16. Residues Ser24–Ser157 form the Ephrin RBD domain. Asn32 carries an N-linked (GlcNAc...) asparagine glycan. Disulfide bonds link Cys57–Cys97 and Cys85–Cys146. Cys174 carries GPI-anchor amidated cysteine lipidation. Positions Gly175–Val195 are cleaved as a propeptide — removed in mature form.

Belongs to the ephrin family. In terms of assembly, binds to the receptor tyrosine kinases epha2, epha3, epha4 and epha5. Interacts with epha8; activates epha8. As to expression, widespread expression in the embryo.

It localises to the cell membrane. Functionally, cell surface GPI-bound ligand for Eph receptors, a family of receptor tyrosine kinases which are crucial for migration, repulsion and adhesion during neuronal, vascular and epithelial development. Binds promiscuously Eph receptors residing on adjacent cells, leading to contact-dependent bidirectional signaling into neighboring cells. The signaling pathway downstream of the receptor is referred to as forward signaling while the signaling pathway downstream of the ephrin ligand is referred to as reverse signaling. With the epha2 receptor may play a role in bone remodeling through regulation of osteoclastogenesis and osteoblastogenesis. The chain is Ephrin-A2 (efna2) from Danio rerio (Zebrafish).